The primary structure comprises 494 residues: UDP-glucose 6-dehydrogenase (494 aa).

NAD(+) is bound by residues 11–16 (GAGYVG), aspartate 36, arginine 41, and 89–93 (VNTPT). Residues 88–110 (SVNTPTKTYGMGKGRAADLKYIE) form a disordered region. Lysine 107 carries the post-translational modification N6-acetyllysine. The interval 129-135 (KSTVPVR) is allosteric switch region. 130-132 (STV) contacts NAD(+). The active-site Proton donor/acceptor is glutamate 161. Residues 161–165 (EFLAE), 220–224 (KLTAN), arginine 260, and 267–273 (KASVGFG) each bind substrate. Glutamate 165 lines the NAD(+) pocket. Lysine 220 acts as the Proton donor/acceptor in catalysis. The Nucleophile role is filled by cysteine 276. Residue 276 to 279 (CFQK) coordinates NAD(+). Residues 321–325 (SLFNT) form an important for formation of active hexamer structure region. Residue 338–339 (FK) participates in substrate binding. Arginine 346 contacts NAD(+). Arginine 442 provides a ligand contact to substrate. The segment at 466-494 (VSSKRIPYAPSGEIPKFSLQDMPNKKPRV) is disordered. Serine 476 carries the phosphoserine modification.

This sequence belongs to the UDP-glucose/GDP-mannose dehydrogenase family. Homohexamer.

It catalyses the reaction UDP-alpha-D-glucose + 2 NAD(+) + H2O = UDP-alpha-D-glucuronate + 2 NADH + 3 H(+). The protein operates within nucleotide-sugar biosynthesis; UDP-alpha-D-glucuronate biosynthesis; UDP-alpha-D-glucuronate from UDP-alpha-D-glucose: step 1/1. UDP-alpha-D-xylose (UDX) acts as a feedback inhibitor. It binds at the same site as the substrate, but functions as allosteric inhibitor by triggering a conformation change that disrupts the active hexameric ring structure and gives rise to an inactive, horseshoe-shaped hexamer. Its function is as follows. Catalyzes the formation of UDP-alpha-D-glucuronate, a constituent of complex glycosaminoglycans. Required for the biosynthesis of chondroitin sulfate and heparan sulfate. Required for embryonic development via its role in the biosynthesis of glycosaminoglycans. Required for proper brain and neuronal development. This Bos taurus (Bovine) protein is UDP-glucose 6-dehydrogenase (UGDH).